We begin with the raw amino-acid sequence, 480 residues long: Membrane-bound lytic murein transglycosylase F (480 aa).

The N-terminal stretch at methionine 1–alanine 15 is a signal peptide. Residues glycine 16–valine 259 are non-LT domain. Positions lysine 260 to glutamate 480 are LT domain. Glutamate 304 is a catalytic residue.

This sequence in the N-terminal section; belongs to the bacterial solute-binding protein 3 family. The protein in the C-terminal section; belongs to the transglycosylase Slt family.

It is found in the cell outer membrane. The catalysed reaction is Exolytic cleavage of the (1-&gt;4)-beta-glycosidic linkage between N-acetylmuramic acid (MurNAc) and N-acetylglucosamine (GlcNAc) residues in peptidoglycan, from either the reducing or the non-reducing ends of the peptidoglycan chains, with concomitant formation of a 1,6-anhydrobond in the MurNAc residue.. Murein-degrading enzyme that degrades murein glycan strands and insoluble, high-molecular weight murein sacculi, with the concomitant formation of a 1,6-anhydromuramoyl product. Lytic transglycosylases (LTs) play an integral role in the metabolism of the peptidoglycan (PG) sacculus. Their lytic action creates space within the PG sacculus to allow for its expansion as well as for the insertion of various structures such as secretion systems and flagella. The polypeptide is Membrane-bound lytic murein transglycosylase F (Shewanella woodyi (strain ATCC 51908 / MS32)).